A 491-amino-acid chain; its full sequence is Glutamyl-tRNA(Gln) amidotransferase subunit A (491 aa).

Residues Lys-78 and Ser-158 each act as charge relay system in the active site. The active-site Acyl-ester intermediate is the Ser-182.

The protein belongs to the amidase family. GatA subfamily. In terms of assembly, heterotrimer of A, B and C subunits.

The enzyme catalyses L-glutamyl-tRNA(Gln) + L-glutamine + ATP + H2O = L-glutaminyl-tRNA(Gln) + L-glutamate + ADP + phosphate + H(+). In terms of biological role, allows the formation of correctly charged Gln-tRNA(Gln) through the transamidation of misacylated Glu-tRNA(Gln) in organisms which lack glutaminyl-tRNA synthetase. The reaction takes place in the presence of glutamine and ATP through an activated gamma-phospho-Glu-tRNA(Gln). This is Glutamyl-tRNA(Gln) amidotransferase subunit A from Afipia carboxidovorans (strain ATCC 49405 / DSM 1227 / KCTC 32145 / OM5) (Oligotropha carboxidovorans).